The sequence spans 509 residues: UDP-N-acetylmuramyl-tripeptide synthetase (509 aa).

Residue 124–130 (GTNGKTS) coordinates ATP. UDP-N-acetyl-alpha-D-muramoyl-L-alanyl-D-glutamate is bound by residues 164 to 165 (TT), serine 191, and arginine 199. Position 231 is an N6-carboxylysine (lysine 231).

It belongs to the MurCDEF family. MurE subfamily. Carboxylation is probably crucial for Mg(2+) binding and, consequently, for the gamma-phosphate positioning of ATP.

The protein localises to the cytoplasm. Its pathway is cell wall biogenesis; peptidoglycan biosynthesis. Catalyzes the addition of an amino acid to the nucleotide precursor UDP-N-acetylmuramoyl-L-alanyl-D-glutamate (UMAG) in the biosynthesis of bacterial cell-wall peptidoglycan. This Tropheryma whipplei (strain Twist) (Whipple's bacillus) protein is UDP-N-acetylmuramyl-tripeptide synthetase.